The following is a 419-amino-acid chain: Acyl-coenzyme A thioesterase 1 (419 aa).

Residues Ser232, Asp324, and His358 each act as charge relay system in the active site. At Ser416 the chain carries Phosphoserine.

Belongs to the C/M/P thioester hydrolase family. As to quaternary structure, monomer. In terms of tissue distribution, expressed in heart, kidney, brown adipose tissue, white adipose tissue, adrenal gland and muscle.

It localises to the cytoplasm. The protein resides in the cytosol. The enzyme catalyses hexadecanoyl-CoA + H2O = hexadecanoate + CoA + H(+). It carries out the reaction decanoyl-CoA + H2O = decanoate + CoA + H(+). It catalyses the reaction dodecanoyl-CoA + H2O = dodecanoate + CoA + H(+). The catalysed reaction is tetradecanoyl-CoA + H2O = tetradecanoate + CoA + H(+). The enzyme catalyses octadecanoyl-CoA + H2O = octadecanoate + CoA + H(+). It carries out the reaction eicosanoyl-CoA + H2O = eicosanoate + CoA + H(+). It catalyses the reaction (9Z)-octadecenoyl-CoA + H2O = (9Z)-octadecenoate + CoA + H(+). The catalysed reaction is (9Z)-hexadecenoyl-CoA + H2O = (9Z)-hexadecenoate + CoA + H(+). The enzyme catalyses (9E)-octadecenoyl-CoA + H2O = (9E)-octadecenoate + CoA + H(+). It functions in the pathway lipid metabolism; fatty acid metabolism. Functionally, catalyzes the hydrolysis of acyl-CoAs into free fatty acids and coenzyme A (CoASH), regulating their respective intracellular levels. More active towards saturated and unsaturated long chain fatty acyl-CoAs (C12-C20). This chain is Acyl-coenzyme A thioesterase 1 (Acot1), found in Mus musculus (Mouse).